The sequence spans 117 residues: Ribosome-binding factor A (117 aa).

This sequence belongs to the RbfA family. Monomer. Binds 30S ribosomal subunits, but not 50S ribosomal subunits or 70S ribosomes.

The protein localises to the cytoplasm. Functionally, one of several proteins that assist in the late maturation steps of the functional core of the 30S ribosomal subunit. Associates with free 30S ribosomal subunits (but not with 30S subunits that are part of 70S ribosomes or polysomes). Required for efficient processing of 16S rRNA. May interact with the 5'-terminal helix region of 16S rRNA. The sequence is that of Ribosome-binding factor A from Nitrosomonas europaea (strain ATCC 19718 / CIP 103999 / KCTC 2705 / NBRC 14298).